The following is a 95-amino-acid chain: MNNSFNKEDRMSSDTMVGSCDRQTKNGAKWHGGVSSLLDFTLIYIQLSTSFQNAGHSFKKQHICSDFEVMDELSCAVYGNKFYYLLPTLTHPSIQ.

Residues 1–12 show a composition bias toward basic and acidic residues; sequence MNNSFNKEDRMS. Positions 1 to 20 are disordered; that stretch reads MNNSFNKEDRMSSDTMVGSC.

Could play a role in innate immunity against viruses. This chain is Putative protein RDUR, found in Homo sapiens (Human).